Reading from the N-terminus, the 592-residue chain is Tegument protein US23 (592 aa).

The interval 407-491 (PRSLGDGEEE…NNVVPNVERR (85 aa)) is disordered. Positions 460-481 (ADDEEQGEDDDDSGAEPMEPEE) are enriched in acidic residues.

It belongs to the herpesviridae US22 family.

It localises to the virion tegument. The chain is Tegument protein US23 (US23) from Homo sapiens (Human).